Here is a 338-residue protein sequence, read N- to C-terminus: Eukaryotic translation initiation factor 3 subunit H (338 aa).

In terms of domain architecture, MPN spans 22–154 (VQCDGLAVMK…LKAYRLTPQA (133 aa)).

The protein belongs to the eIF-3 subunit H family. As to quaternary structure, component of the eukaryotic translation initiation factor 3 (eIF-3) complex. The eIF-3 complex interacts with pix. Interacts with mxt.

The protein localises to the cytoplasm. In terms of biological role, component of the eukaryotic translation initiation factor 3 (eIF-3) complex, which is involved in protein synthesis of a specialized repertoire of mRNAs and, together with other initiation factors, stimulates binding of mRNA and methionyl-tRNAi to the 40S ribosome. The eIF-3 complex specifically targets and initiates translation of a subset of mRNAs involved in cell proliferation. The protein is Eukaryotic translation initiation factor 3 subunit H of Drosophila erecta (Fruit fly).